A 337-amino-acid polypeptide reads, in one-letter code: HTH-type transcriptional repressor PurR (337 aa).

Residues 2–56 (ATIKDVAKLAAVSTTTVSHVINKTRFVAEATQKRVWEAVEELNYAPSAVARSLKC) enclose the HTH lacI-type domain. The H-T-H motif DNA-binding region spans 4-23 (IKDVAKLAAVSTTTVSHVIN). The DNA-binding element occupies 48–56 (SAVARSLKC). 5 residues coordinate hypoxanthine: Phe73, Lys189, Thr191, Phe220, and Asp276.

As to quaternary structure, homodimer.

It participates in purine metabolism; purine nucleotide biosynthesis [regulation]. Its function is as follows. Is the main repressor of the genes involved in the de novo synthesis of purine nucleotides, regulating purB, purC, purEK, purF, purHD, purL, purMN and guaBA expression. PurR is allosterically activated to bind its cognate DNA by binding the purine corepressors, hypoxanthine or guanine, thereby effecting transcription repression. This is HTH-type transcriptional repressor PurR from Aliivibrio fischeri (strain ATCC 700601 / ES114) (Vibrio fischeri).